Here is an 82-residue protein sequence, read N- to C-terminus: Large ribosomal subunit protein bL31B (82 aa).

This sequence belongs to the bacterial ribosomal protein bL31 family. Type B subfamily. In terms of assembly, part of the 50S ribosomal subunit.

The protein is Large ribosomal subunit protein bL31B of Proteus mirabilis (strain HI4320).